Consider the following 339-residue polypeptide: Glycerol-3-phosphate dehydrogenase [NAD(P)+] (339 aa).

NADPH contacts are provided by S15, Y16, H36, and K110. Sn-glycerol 3-phosphate contacts are provided by K110, G139, and T141. An NADPH-binding site is contributed by A143. Residues K195, D248, S258, R259, and N260 each coordinate sn-glycerol 3-phosphate. K195 (proton acceptor) is an active-site residue. R259 is a binding site for NADPH. NADPH-binding residues include V283 and E285.

Belongs to the NAD-dependent glycerol-3-phosphate dehydrogenase family.

Its subcellular location is the cytoplasm. The enzyme catalyses sn-glycerol 3-phosphate + NAD(+) = dihydroxyacetone phosphate + NADH + H(+). It catalyses the reaction sn-glycerol 3-phosphate + NADP(+) = dihydroxyacetone phosphate + NADPH + H(+). It participates in membrane lipid metabolism; glycerophospholipid metabolism. Its function is as follows. Catalyzes the reduction of the glycolytic intermediate dihydroxyacetone phosphate (DHAP) to sn-glycerol 3-phosphate (G3P), the key precursor for phospholipid synthesis. This Citrobacter koseri (strain ATCC BAA-895 / CDC 4225-83 / SGSC4696) protein is Glycerol-3-phosphate dehydrogenase [NAD(P)+].